Consider the following 440-residue polypeptide: MVLFSLVATHADIDLETVAQLSNGSSELASAALTDSSVVSGAVVLATCNRYEVYGETANGADLEAARSALVSQISELSGLNEQLVSRSFATHTGPDVTRHLFAVSAGLDSAVVGEREIAGQVRRALITAQQEGTASSGLVRLFQAASKTAKDVGAQTALGSRGLSIVSVALDLATDLAENDDWTTKKVVVFGTGAYAGATMSLLRERGCTDISVYSSSGRAEGFVATRGGTALDADTLPAAVAAADVMIGCSGSDNRVEAADLARVRANSGKPLIAIDLALTHDFDPAVGELDGVELLTLESVRLAAPQEQAESLSQASAIVNGAATSFESEREARSVDTAIVALRRHTMNVLDAEMEKVRARHGCTAAAEEVEFALRRMVKQLLHIPTVRARELAANGQQDDYVAALEALYGIQVEQPQAAAPASECPVDHEQLRSESA.

Substrate is bound by residues 47–50 (TCNR), Ser-110, 115–117 (ERE), and Gln-121. Cys-48 (nucleophile) is an active-site residue. Residue 192-197 (GTGAYA) coordinates NADP(+).

The protein belongs to the glutamyl-tRNA reductase family. As to quaternary structure, homodimer.

The enzyme catalyses (S)-4-amino-5-oxopentanoate + tRNA(Glu) + NADP(+) = L-glutamyl-tRNA(Glu) + NADPH + H(+). Its pathway is porphyrin-containing compound metabolism; protoporphyrin-IX biosynthesis; 5-aminolevulinate from L-glutamyl-tRNA(Glu): step 1/2. In terms of biological role, catalyzes the NADPH-dependent reduction of glutamyl-tRNA(Glu) to glutamate 1-semialdehyde (GSA). This chain is Glutamyl-tRNA reductase, found in Paenarthrobacter aurescens (strain TC1).